We begin with the raw amino-acid sequence, 273 residues long: Formamidopyrimidine-DNA glycosylase (273 aa).

Residue Pro-2 is the Schiff-base intermediate with DNA of the active site. The active-site Proton donor is Glu-3. Residue Lys-58 is the Proton donor; for beta-elimination activity of the active site. Residues His-91, Arg-109, and Arg-154 each coordinate DNA. The segment at 239-273 adopts an FPG-type zinc-finger fold; that stretch reads FCYARTGEPCRICKTPIRQIVQGQRSTFYCPNCQK. Residue Arg-263 is the Proton donor; for delta-elimination activity of the active site.

This sequence belongs to the FPG family. As to quaternary structure, monomer. It depends on Zn(2+) as a cofactor.

The enzyme catalyses Hydrolysis of DNA containing ring-opened 7-methylguanine residues, releasing 2,6-diamino-4-hydroxy-5-(N-methyl)formamidopyrimidine.. The catalysed reaction is 2'-deoxyribonucleotide-(2'-deoxyribose 5'-phosphate)-2'-deoxyribonucleotide-DNA = a 3'-end 2'-deoxyribonucleotide-(2,3-dehydro-2,3-deoxyribose 5'-phosphate)-DNA + a 5'-end 5'-phospho-2'-deoxyribonucleoside-DNA + H(+). Functionally, involved in base excision repair of DNA damaged by oxidation or by mutagenic agents. Acts as a DNA glycosylase that recognizes and removes damaged bases. Has a preference for oxidized purines, such as 7,8-dihydro-8-oxoguanine (8-oxoG). Has AP (apurinic/apyrimidinic) lyase activity and introduces nicks in the DNA strand. Cleaves the DNA backbone by beta-delta elimination to generate a single-strand break at the site of the removed base with both 3'- and 5'-phosphates. The protein is Formamidopyrimidine-DNA glycosylase of Janthinobacterium sp. (strain Marseille) (Minibacterium massiliensis).